The chain runs to 447 residues: BAG family molecular chaperone regulator 5 (447 aa).

BAG domains lie at 9 to 86 (SISR…EQNA), 95 to 167 (QNIF…ENCM), 182 to 260 (SVAK…DLEE), 275 to 350 (SILK…DLKE), and 365 to 442 (SHKA…DLKS).

Binds to the ATPase domain of HSP/HSP70 chaperones. Binds PRKN. Interacts complex with HSPA8 and JPH2.

Its function is as follows. Co-chaperone for HSP/HSP70 proteins. It functions as a nucleotide-exchange factor promoting the release of ADP from HSP70, thereby activating Hsp70-mediated protein refolding. Has an essential role in maintaining proteostasis at junctional membrane complexes (JMC), where it may function as a scaffold between the HSPA8 chaperone and JMC proteins enabling correct, HSPA8-dependent JMC protein folding. Inhibits both auto-ubiquitination of PRKN and ubiquitination of target proteins by PRKN. The polypeptide is BAG family molecular chaperone regulator 5 (BAG5) (Bos taurus (Bovine)).